The sequence spans 164 residues: Peptidyl-prolyl cis-trans isomerase A (164 aa).

M1 carries the N-acetylmethionine modification. The residue at position 2 (V2) is an N-acetylvaline; in Peptidyl-prolyl cis-trans isomerase A, N-terminally processed. One can recognise a PPIase cyclophilin-type domain in the interval 7-163 (FFDIAVDGEP…KKITIANCGQ (157 aa)). Position 28 is an N6-acetyllysine; alternate (K28). K28 participates in a covalent cross-link: Glycyl lysine isopeptide (Lys-Gly) (interchain with G-Cter in SUMO2); alternate. K28 participates in a covalent cross-link: Glycyl lysine isopeptide (Lys-Gly) (interchain with G-Cter in ubiquitin); alternate. K44 and K76 each carry N6-acetyllysine. S77 is modified (phosphoserine). K82 carries the N6-acetyllysine; alternate modification. K82 participates in a covalent cross-link: Glycyl lysine isopeptide (Lys-Gly) (interchain with G-Cter in SUMO2); alternate. A Phosphothreonine modification is found at T93. An N-linked (GlcNAc...) asparagine glycan is attached at N108. Residues K125 and K133 each carry the N6-acetyllysine modification.

Belongs to the cyclophilin-type PPIase family. PPIase A subfamily. Interacts with protein phosphatase PPP3CA/calcineurin A. Interacts with isoform 2 of BSG/CD147. Interacts with FOXO1; the interaction promotes FOXO1 dephosphorylation, nuclear accumulation and transcriptional activity. Interacts with integrin ITGA2B:ITGB3; the interaction is ROS and peptidyl-prolyl cis-trans isomerase (PPIase) activity-dependent and is increased in the presence of thrombin. Interacts with MAP3K5. Interacts with TARDBP; the interaction is dependent on the RNA-binding activity of TARDBP and the PPIase activity of PPIA/CYPA and the acetylation of PPIA/CYPA at Lys-125 favors the interaction. Interacts with HNRNPA1, HNRNPA2B1, HNRNPC, RBMX, HNRNPK and HNRNPM. Acetylation at Lys-125 markedly inhibits catalysis of cis to trans isomerization. PPIA acetylation also antagonizes the immunosuppressive effects of cyclosporine by inhibiting the sequential steps of cyclosporine binding and calcineurin inhibition. Acetylation at Lys-125 favors the interaction with TARDBP.

It is found in the cytoplasm. Its subcellular location is the secreted. The protein resides in the nucleus. It carries out the reaction [protein]-peptidylproline (omega=180) = [protein]-peptidylproline (omega=0). Binds cyclosporin A (CsA). CsA mediates some of its effects via an inhibitory action on PPIase. Catalyzes the cis-trans isomerization of proline imidic peptide bonds in oligopeptides. Exerts a strong chemotactic effect on leukocytes partly through activation of one of its membrane receptors BSG/CD147, initiating a signaling cascade that culminates in MAPK/ERK activation. Activates endothelial cells (ECs) in a proinflammatory manner by stimulating activation of NF-kappa-B and ERK, JNK and p38 MAP-kinases and by inducing expression of adhesion molecules including SELE and VCAM1. Induces apoptosis in ECs by promoting the FOXO1-dependent expression of CCL2 and BCL2L11 which are involved in EC chemotaxis and apoptosis. In response to oxidative stress, initiates proapoptotic and antiapoptotic signaling in ECs via activation of NF-kappa-B and AKT1 and up-regulation of antiapoptotic protein BCL2. Negatively regulates MAP3K5/ASK1 kinase activity, autophosphorylation and oxidative stress-induced apoptosis mediated by MAP3K5/ASK1. Necessary for the assembly of TARDBP in heterogeneous nuclear ribonucleoprotein (hnRNP) complexes and regulates TARDBP binding to RNA UG repeats and TARDBP-dependent expression of HDAC6, ATG7 and VCP which are involved in clearance of protein aggregates. Plays an important role in platelet activation and aggregation. Regulates calcium mobilization and integrin ITGA2B:ITGB3 bidirectional signaling via increased ROS production as well as by facilitating the interaction between integrin and the cell cytoskeleton. Binds heparan sulfate glycosaminoglycans. The sequence is that of Peptidyl-prolyl cis-trans isomerase A (PPIA) from Oryctolagus cuniculus (Rabbit).